Here is a 477-residue protein sequence, read N- to C-terminus: UDP-N-acetylmuramate--L-alanine ligase (477 aa).

Position 122–128 (122–128 (GTHGKTT)) interacts with ATP.

The protein belongs to the MurCDEF family.

The protein resides in the cytoplasm. The catalysed reaction is UDP-N-acetyl-alpha-D-muramate + L-alanine + ATP = UDP-N-acetyl-alpha-D-muramoyl-L-alanine + ADP + phosphate + H(+). It participates in cell wall biogenesis; peptidoglycan biosynthesis. Functionally, cell wall formation. This is UDP-N-acetylmuramate--L-alanine ligase from Xylella fastidiosa (strain M23).